The chain runs to 523 residues: MPSVAGEEPKASSRLLLVSNRLPITIKRTEDGQYDFTGSSGGLVTGLSGLAKTTTFQWYGWPGLEVPDAEAKPLVKRLKDEHGAHPVFVDDELADKHYNGFSNSILWPLFHYHPGEITFDESQWMAYKEVNRLFAKTIAKDVQDGDLIWVHDYHLMLLPEMLRDEIGTSKKNVKIGFFLHTPFPSSEIYRILPVRESLLLSVLHCDLIGFHTYDYARHFLSSCSRILETQTTPNGVEFRGKYVTVAAFPIGIDPEKFIETLKKPKVEERIAQLERKFEGVKLIVGVDRLDYIKGVPQKLHALEVFLTEHPEWIGKVVLVQVAVPSRQDVEEYQNLRAVVNELVGRINGRFGTVEFMPIHFLHQSVNFDELTALYAVSDACLVSSTRDGMNLVSYEYIATQRKRHGVMILSEFTGAAQSLNGALIVNPWNTEELADAIHDAVTMSPEQREINFKKLEKYVFKYTSSWWGESFVSELQRISEHAAKKSNSKGTVDKMPDLVEGVQQFNLGEQREEGRLEPGEFDD.

D-glucose 6-phosphate-binding residues include Y98 and D152. UDP is bound by residues R288 and K293. Residues R288 and K293 each coordinate UDP-alpha-D-glucose. R326 is a D-glucose 6-phosphate binding site. 387–395 (DGMNLVSYE) contacts UDP-alpha-D-glucose. Position 391-395 (391-395 (LVSYE)) interacts with UDP. Positions 503-523 (QQFNLGEQREEGRLEPGEFDD) are disordered. The segment covering 509 to 523 (EQREEGRLEPGEFDD) has biased composition (basic and acidic residues).

The protein belongs to the glycosyltransferase 20 family.

It carries out the reaction D-glucose 6-phosphate + UDP-alpha-D-glucose = alpha,alpha-trehalose 6-phosphate + UDP + H(+). Its pathway is carbohydrate biosynthesis. Synthase catalytic subunit of the trehalose synthase complex that catalyzes the production of trehalose from glucose-6-phosphate and UDP-alpha-D-glucose in a two step process. The disaccharide trehalose serves as a storage carbohydrate that is mobilized during conidial germination. Trehalose also serves as a protectant for cell integrity during stress. The polypeptide is Alpha,alpha-trehalose-phosphate synthase [UDP-forming] (Botryotinia fuckeliana (strain B05.10) (Noble rot fungus)).